The primary structure comprises 100 residues: Large ribosomal subunit protein bL21 (100 aa).

The protein belongs to the bacterial ribosomal protein bL21 family. As to quaternary structure, part of the 50S ribosomal subunit. Contacts protein L20.

Its function is as follows. This protein binds to 23S rRNA in the presence of protein L20. The polypeptide is Large ribosomal subunit protein bL21 (Ureaplasma urealyticum serovar 10 (strain ATCC 33699 / Western)).